Consider the following 243-residue polypeptide: NADH-ubiquinone oxidoreductase chain 6 (243 aa).

The next 5 helical transmembrane spans lie at 16-36, 41-61, 69-89, 104-124, and 201-221; these read ISSV…SVIV, IISV…LILL, AYLI…LMLI, IPLT…LLPY, and IWLF…IVII.

Belongs to the complex I subunit 6 family.

It is found in the mitochondrion membrane. It carries out the reaction a ubiquinone + NADH + 5 H(+)(in) = a ubiquinol + NAD(+) + 4 H(+)(out). Core subunit of the mitochondrial membrane respiratory chain NADH dehydrogenase (Complex I) that is believed to belong to the minimal assembly required for catalysis. Complex I functions in the transfer of electrons from NADH to the respiratory chain. The immediate electron acceptor for the enzyme is believed to be ubiquinone. The protein is NADH-ubiquinone oxidoreductase chain 6 (ndh-6) of Neurospora crassa (strain ATCC 24698 / 74-OR23-1A / CBS 708.71 / DSM 1257 / FGSC 987).